The chain runs to 892 residues: Phenylalanine--tRNA ligase beta subunit (892 aa).

The tRNA-binding domain occupies 39 to 150 (NPGVEGVVVG…PGLEPGMDVA (112 aa)). Positions 406–569 (AVPPVILLRT…RCEGYDAIPL (164 aa)) constitute a B5 domain. An insert region spans residues 442 to 518 (VLTPADLAAD…ALLGGGESDG (77 aa)). Residues D547, D553, E556, and E557 each contribute to the Mg(2+) site. The region spanning 799-891 (PRFPAVTRDV…ALKALGAELR (93 aa)) is the FDX-ACB domain.

It belongs to the phenylalanyl-tRNA synthetase beta subunit family. Type 1 subfamily. Tetramer of two alpha and two beta subunits. It depends on Mg(2+) as a cofactor.

It localises to the cytoplasm. The catalysed reaction is tRNA(Phe) + L-phenylalanine + ATP = L-phenylalanyl-tRNA(Phe) + AMP + diphosphate + H(+). In Symbiobacterium thermophilum (strain DSM 24528 / JCM 14929 / IAM 14863 / T), this protein is Phenylalanine--tRNA ligase beta subunit.